A 271-amino-acid polypeptide reads, in one-letter code: Phosphate import ATP-binding protein PstB 2 (271 aa).

Residues 25–266 (MATEDLHVYY…PQEKQTEDYI (242 aa)) enclose the ABC transporter domain. 57-64 (GPSGCGKS) contacts ATP.

The protein belongs to the ABC transporter superfamily. Phosphate importer (TC 3.A.1.7) family. As to quaternary structure, the complex is composed of two ATP-binding proteins (PstB), two transmembrane proteins (PstC and PstA) and a solute-binding protein (PstS).

It is found in the cell membrane. It carries out the reaction phosphate(out) + ATP + H2O = ADP + 2 phosphate(in) + H(+). Functionally, part of the ABC transporter complex PstSACB involved in phosphate import. Responsible for energy coupling to the transport system. The protein is Phosphate import ATP-binding protein PstB 2 of Listeria monocytogenes serovar 1/2a (strain ATCC BAA-679 / EGD-e).